A 314-amino-acid polypeptide reads, in one-letter code: MDKNQTEVMREFFLSGFSQTPSIEAGLFVLFLFFYMSIWVGNVLIMVTVASDKYLNSSPMYFLLGNLSFLDLCYSTVTTPKLLADFFNHEKLISYDQCIVQLFFLHFVGAAEMFLLTVMAYDRYVAICRPLHYTTVMSRGLCCVLVAASWMGGFVHSTVQTILTVHLPFCGPNQVENTFFCDVPPVIKLACADTFVIELLMVSNSGLISTISFVVLISSYTTILVKIRSKEGRRKALSTCASHLMVVTLFFGPCIFIYARPFSTFSVDKMVSVLYNVITPMLNPLIYTLRNKEVKSAMQKLWVRNGLTWKKQET.

Topologically, residues 1 to 26 are extracellular; it reads MDKNQTEVMREFFLSGFSQTPSIEAG. An N-linked (GlcNAc...) asparagine glycan is attached at Asn-4. A helical transmembrane segment spans residues 27–47; sequence LFVLFLFFYMSIWVGNVLIMV. Over 48 to 61 the chain is Cytoplasmic; sequence TVASDKYLNSSPMY. Residues 62 to 84 traverse the membrane as a helical segment; sequence FLLGNLSFLDLCYSTVTTPKLLA. Topologically, residues 85–98 are extracellular; it reads DFFNHEKLISYDQC. Cys-98 and Cys-181 are disulfide-bonded. A helical transmembrane segment spans residues 99–119; it reads IVQLFFLHFVGAAEMFLLTVM. The Cytoplasmic segment spans residues 120–142; sequence AYDRYVAICRPLHYTTVMSRGLC. A helical membrane pass occupies residues 143 to 163; it reads CVLVAASWMGGFVHSTVQTIL. Over 164-196 the chain is Extracellular; that stretch reads TVHLPFCGPNQVENTFFCDVPPVIKLACADTFV. The chain crosses the membrane as a helical span at residues 197–217; the sequence is IELLMVSNSGLISTISFVVLI. At 218–236 the chain is on the cytoplasmic side; that stretch reads SSYTTILVKIRSKEGRRKA. The helical transmembrane segment at 237–257 threads the bilayer; sequence LSTCASHLMVVTLFFGPCIFI. Residues 258–268 are Extracellular-facing; that stretch reads YARPFSTFSVD. A helical membrane pass occupies residues 269 to 289; that stretch reads KMVSVLYNVITPMLNPLIYTL. The Cytoplasmic segment spans residues 290 to 314; sequence RNKEVKSAMQKLWVRNGLTWKKQET.

It belongs to the G-protein coupled receptor 1 family.

The protein resides in the cell membrane. Odorant receptor. The polypeptide is Olfactory receptor 4Q2 (OR4Q2) (Homo sapiens (Human)).